A 287-amino-acid polypeptide reads, in one-letter code: Prepilin leader peptidase/N-methyltransferase (287 aa).

The chain crosses the membrane as a helical span at residues 12 to 32 (FMYLVVGLFSLAVGSLLNVII). Zn(2+) is bound by residues cysteine 71, cysteine 74, cysteine 96, and cysteine 99. A run of 5 helical transmembrane segments spans residues 127 to 147 (FTIQ…LVFI), 158 to 178 (LTLG…FVSL), 182 to 202 (VLSC…FYLM), 215 to 235 (LFAA…LLIS), and 259 to 279 (PFGP…DSII).

The protein belongs to the peptidase A24 family. Requires Zn(2+) as cofactor.

It localises to the cell inner membrane. It catalyses the reaction Typically cleaves a -Gly-|-Phe- bond to release an N-terminal, basic peptide of 5-8 residues from type IV prepilin, and then N-methylates the new N-terminal amino group, the methyl donor being S-adenosyl-L-methionine.. Its function is as follows. Plays an essential role in type IV pili and type II pseudopili formation by proteolytically removing the leader sequence from substrate proteins and subsequently monomethylating the alpha-amino group of the newly exposed N-terminal phenylalanine. In Legionella pneumophila, this protein is Prepilin leader peptidase/N-methyltransferase (pilD).